The chain runs to 221 residues: DNA mismatch repair protein MutH (221 aa).

The protein belongs to the MutH family.

It localises to the cytoplasm. Sequence-specific endonuclease that cleaves unmethylated GATC sequences. It is involved in DNA mismatch repair. The sequence is that of DNA mismatch repair protein MutH from Vibrio cholerae serotype O1 (strain ATCC 39541 / Classical Ogawa 395 / O395).